The sequence spans 138 residues: ATP synthase epsilon chain (138 aa).

It belongs to the ATPase epsilon chain family. In terms of assembly, F-type ATPases have 2 components, CF(1) - the catalytic core - and CF(0) - the membrane proton channel. CF(1) has five subunits: alpha(3), beta(3), gamma(1), delta(1), epsilon(1). CF(0) has three main subunits: a, b and c.

The protein localises to the cell inner membrane. Its function is as follows. Produces ATP from ADP in the presence of a proton gradient across the membrane. In Geobacter sulfurreducens (strain ATCC 51573 / DSM 12127 / PCA), this protein is ATP synthase epsilon chain.